The sequence spans 435 residues: Proline--tRNA ligase (435 aa).

It belongs to the class-II aminoacyl-tRNA synthetase family. ProS type 2 subfamily. Homodimer.

Its subcellular location is the cytoplasm. It catalyses the reaction tRNA(Pro) + L-proline + ATP = L-prolyl-tRNA(Pro) + AMP + diphosphate. Functionally, catalyzes the attachment of proline to tRNA(Pro) in a two-step reaction: proline is first activated by ATP to form Pro-AMP and then transferred to the acceptor end of tRNA(Pro). The chain is Proline--tRNA ligase from Rhodospirillum rubrum (strain ATCC 11170 / ATH 1.1.1 / DSM 467 / LMG 4362 / NCIMB 8255 / S1).